We begin with the raw amino-acid sequence, 389 residues long: Lipid-A-disaccharide synthase (389 aa).

The protein belongs to the LpxB family.

The catalysed reaction is a lipid X + a UDP-2-N,3-O-bis[(3R)-3-hydroxyacyl]-alpha-D-glucosamine = a lipid A disaccharide + UDP + H(+). The protein operates within bacterial outer membrane biogenesis; LPS lipid A biosynthesis. Functionally, condensation of UDP-2,3-diacylglucosamine and 2,3-diacylglucosamine-1-phosphate to form lipid A disaccharide, a precursor of lipid A, a phosphorylated glycolipid that anchors the lipopolysaccharide to the outer membrane of the cell. The polypeptide is Lipid-A-disaccharide synthase (Verminephrobacter eiseniae (strain EF01-2)).